The following is a 118-amino-acid chain: UPF0145 protein PTO0347 (118 aa).

It belongs to the UPF0145 family.

The polypeptide is UPF0145 protein PTO0347 (Picrophilus torridus (strain ATCC 700027 / DSM 9790 / JCM 10055 / NBRC 100828 / KAW 2/3)).